A 124-amino-acid polypeptide reads, in one-letter code: Acidic phospholipase A2 A (124 aa).

7 disulfide bridges follow: C26–C116, C28–C44, C43–C95, C49–C124, C50–C88, C57–C81, and C75–C86. Y27, G29, and G31 together coordinate Ca(2+). H47 is a catalytic residue. D48 lines the Ca(2+) pocket. The active site involves D89.

It belongs to the phospholipase A2 family. Group II subfamily. D49 sub-subfamily. The cofactor is Ca(2+). In terms of tissue distribution, expressed by the venom gland.

It localises to the secreted. The catalysed reaction is a 1,2-diacyl-sn-glycero-3-phosphocholine + H2O = a 1-acyl-sn-glycero-3-phosphocholine + a fatty acid + H(+). PLA2 catalyzes the calcium-dependent hydrolysis of the 2-acyl groups in 3-sn-phosphoglycerides. This Gloydius halys (Chinese water mocassin) protein is Acidic phospholipase A2 A.